The chain runs to 121 residues: Large ribosomal subunit protein bL19 (121 aa).

It belongs to the bacterial ribosomal protein bL19 family.

In terms of biological role, this protein is located at the 30S-50S ribosomal subunit interface and may play a role in the structure and function of the aminoacyl-tRNA binding site. The chain is Large ribosomal subunit protein bL19 from Borrelia garinii subsp. bavariensis (strain ATCC BAA-2496 / DSM 23469 / PBi) (Borreliella bavariensis).